The chain runs to 33 residues: Actin (33 aa).

The protein belongs to the actin family.

The protein resides in the cytoplasm. It is found in the cytoskeleton. The enzyme catalyses ATP + H2O = ADP + phosphate + H(+). Actins are highly conserved proteins that are involved in various types of cell motility and are ubiquitously expressed in all eukaryotic cells. This Dictyocaulus viviparus (Bovine lungworm) protein is Actin.